A 374-amino-acid polypeptide reads, in one-letter code: Protein RecA (374 aa).

ATP is bound at residue 77–84 (GPESSGKT). The tract at residues 355-374 (AAKTAAADKSAPAKASEAAA) is disordered.

Belongs to the RecA family.

Its subcellular location is the cytoplasm. Its function is as follows. Can catalyze the hydrolysis of ATP in the presence of single-stranded DNA, the ATP-dependent uptake of single-stranded DNA by duplex DNA, and the ATP-dependent hybridization of homologous single-stranded DNAs. It interacts with LexA causing its activation and leading to its autocatalytic cleavage. The protein is Protein RecA of Synechococcus sp. (strain CC9605).